We begin with the raw amino-acid sequence, 433 residues long: Shufflon protein C' (433 aa).

The interval 1 to 361 (MKKYDRGWAS…TGAILSCQSG (361 aa)) is constant region. Residues 362–433 (RWSGGNKINY…HVDAYCCPFN (72 aa)) are variable region.

The chain is Shufflon protein C' from Escherichia coli.